Consider the following 159-residue polypeptide: H/ACA ribonucleoprotein complex subunit 2-like protein (159 aa).

The interval 1–28 is disordered; it reads MAKTPKKDKTEEKEEHEESGGNKEDRER.

This sequence belongs to the eukaryotic ribosomal protein eL8 family. Component of the small nucleolar ribonucleoprotein particle containing H/ACA-type snoRNAs (H/ACA snoRNPs). Component of the telomerase holoenzyme complex.

The protein localises to the nucleus. Its subcellular location is the nucleolus. Functionally, required for ribosome biogenesis. Part of a complex which catalyzes pseudouridylation of rRNA. This involves the isomerization of uridine such that the ribose is subsequently attached to C5, instead of the normal N1. Pseudouridine ('psi') residues may serve to stabilize the conformation of rRNAs. In Branchiostoma belcheri (Amphioxus), this protein is H/ACA ribonucleoprotein complex subunit 2-like protein.